A 256-amino-acid chain; its full sequence is MALAKRIIPCLDVDNGRVVKGVKFENIRDAGDPVEIARRYDEQGADEITFLDITASVDGRDTTLHTVERMASQVFIPLTVGGGVRTVQDIRNLLNAGADKVSINTAAVFNPEFVGEAAQHFGSQCIVVAIDAKKVSGPGETPRWEIFTHGGRKPTGLDAVEWAMKMEGLGAGEILLTSMDQDGMKNGFDLGVTRAISDALGIPVIASGGVGNLQHLADGVIEGHASAVLAASIFHFGEYTVPEAKAYMAARGIVVR.

Catalysis depends on residues aspartate 12 and aspartate 131.

It belongs to the HisA/HisF family. In terms of assembly, heterodimer of HisH and HisF.

The protein localises to the cytoplasm. The catalysed reaction is 5-[(5-phospho-1-deoxy-D-ribulos-1-ylimino)methylamino]-1-(5-phospho-beta-D-ribosyl)imidazole-4-carboxamide + L-glutamine = D-erythro-1-(imidazol-4-yl)glycerol 3-phosphate + 5-amino-1-(5-phospho-beta-D-ribosyl)imidazole-4-carboxamide + L-glutamate + H(+). It participates in amino-acid biosynthesis; L-histidine biosynthesis; L-histidine from 5-phospho-alpha-D-ribose 1-diphosphate: step 5/9. Functionally, IGPS catalyzes the conversion of PRFAR and glutamine to IGP, AICAR and glutamate. The HisF subunit catalyzes the cyclization activity that produces IGP and AICAR from PRFAR using the ammonia provided by the HisH subunit. This is Imidazole glycerol phosphate synthase subunit HisF from Pseudomonas fluorescens (strain SBW25).